A 230-amino-acid chain; its full sequence is MPPSINEPNLQEMFDSLAPKYDRINSILSLGMHHLWNRTFARMLGKSEHLLDLCSGTGKVAYRYIRDYPGSKATLVDFSEKMLLAAQQRYPDAPFTFIEGDIVQLPIDEESQTLASMSYGLRNLSNPKQALEEIHRILQHNGCLGILELTSPSRKHPLYLAHRLYLNFLVPWLGRLCSKNKQAYTYLAESIKKLPSDDYLEQLFQNAKFQVSKKRKLAFGSATIWILKKI.

S-adenosyl-L-methionine contacts are provided by residues threonine 57, aspartate 77, 101–102, and serine 118; that span reads DI.

The protein belongs to the class I-like SAM-binding methyltransferase superfamily. MenG/UbiE family.

It carries out the reaction a 2-demethylmenaquinol + S-adenosyl-L-methionine = a menaquinol + S-adenosyl-L-homocysteine + H(+). It functions in the pathway quinol/quinone metabolism; menaquinone biosynthesis; menaquinol from 1,4-dihydroxy-2-naphthoate: step 2/2. Its function is as follows. Methyltransferase required for the conversion of demethylmenaquinol (DMKH2) to menaquinol (MKH2). This is Demethylmenaquinone methyltransferase from Chlamydia felis (strain Fe/C-56) (Chlamydophila felis).